A 220-amino-acid chain; its full sequence is Iron-sulfur cluster repair protein YtfE (220 aa).

This sequence belongs to the RIC family. YtfE subfamily. Homodimer.

It localises to the cytoplasm. In terms of biological role, di-iron-containing protein involved in the repair of iron-sulfur clusters damaged by oxidative and nitrosative stress conditions. The polypeptide is Iron-sulfur cluster repair protein YtfE (Salmonella paratyphi A (strain AKU_12601)).